The sequence spans 380 residues: Cytochrome b (380 aa).

4 consecutive transmembrane segments (helical) span residues 33–53, 77–98, 113–133, and 178–198; these read FGSLLGLCLLTQILTGLFLAM, WLIRNFHANGASFFFICLYLHI, WNVGVVLFLLVMMTAFVGYVL, and FFAFHFLFPFIIAAMTILHFL. Positions 83 and 97 each coordinate heme b. H182 and H196 together coordinate heme b. H201 is an a ubiquinone binding site. The next 4 helical transmembrane spans lie at 226–246, 288–308, 320–340, and 347–367; these read YKDLLGFVVMLLALSTLSLFS, LGGVLALLSSILILMLVPILH, LTQILFWVLVADVAILTWIGG, and FIIVGQVASVLYFALFLVIMP.

It belongs to the cytochrome b family. The cytochrome bc1 complex contains 3 respiratory subunits (MT-CYB, CYC1 and UQCRFS1), 2 core proteins (UQCRC1 and UQCRC2) and probably 6 low-molecular weight proteins. Requires heme b as cofactor.

It localises to the mitochondrion inner membrane. In terms of biological role, component of the ubiquinol-cytochrome c reductase complex (complex III or cytochrome b-c1 complex) that is part of the mitochondrial respiratory chain. The b-c1 complex mediates electron transfer from ubiquinol to cytochrome c. Contributes to the generation of a proton gradient across the mitochondrial membrane that is then used for ATP synthesis. In Zeus faber (John Dory), this protein is Cytochrome b (mt-cyb).